We begin with the raw amino-acid sequence, 605 residues long: Beta-hexosaminidase ARB_07893 (605 aa).

The first 18 residues, 1–18 (MLWIWVPGILGLFGRVEA), serve as a signal peptide directing secretion. A glycan (N-linked (GlcNAc...) asparagine) is linked at N30. E293 (nucleophile) is an active-site residue. N-linked (GlcNAc...) asparagine glycosylation occurs at N342. The active-site Proton donor is E374. N449 carries N-linked (GlcNAc...) asparagine glycosylation.

It belongs to the glycosyl hydrolase 20 family.

It is found in the secreted. It catalyses the reaction Hydrolysis of terminal non-reducing N-acetyl-D-hexosamine residues in N-acetyl-beta-D-hexosaminides.. Its function is as follows. Beta-hexosaminidase that shows a broad substrate specificity. This chain is Beta-hexosaminidase ARB_07893, found in Arthroderma benhamiae (strain ATCC MYA-4681 / CBS 112371) (Trichophyton mentagrophytes).